The chain runs to 126 residues: UPF0102 protein PMT_0624 (126 aa).

It belongs to the UPF0102 family.

The protein is UPF0102 protein PMT_0624 of Prochlorococcus marinus (strain MIT 9313).